The primary structure comprises 173 residues: Crossover junction endodeoxyribonuclease RuvC (173 aa).

Catalysis depends on residues Asp8, Glu67, and Asp139. Residues Asp8, Glu67, and Asp139 each coordinate Mg(2+).

This sequence belongs to the RuvC family. Homodimer which binds Holliday junction (HJ) DNA. The HJ becomes 2-fold symmetrical on binding to RuvC with unstacked arms; it has a different conformation from HJ DNA in complex with RuvA. In the full resolvosome a probable DNA-RuvA(4)-RuvB(12)-RuvC(2) complex forms which resolves the HJ. The cofactor is Mg(2+).

The protein resides in the cytoplasm. The enzyme catalyses Endonucleolytic cleavage at a junction such as a reciprocal single-stranded crossover between two homologous DNA duplexes (Holliday junction).. Its function is as follows. The RuvA-RuvB-RuvC complex processes Holliday junction (HJ) DNA during genetic recombination and DNA repair. Endonuclease that resolves HJ intermediates. Cleaves cruciform DNA by making single-stranded nicks across the HJ at symmetrical positions within the homologous arms, yielding a 5'-phosphate and a 3'-hydroxyl group; requires a central core of homology in the junction. The consensus cleavage sequence is 5'-(A/T)TT(C/G)-3'. Cleavage occurs on the 3'-side of the TT dinucleotide at the point of strand exchange. HJ branch migration catalyzed by RuvA-RuvB allows RuvC to scan DNA until it finds its consensus sequence, where it cleaves and resolves the cruciform DNA. The protein is Crossover junction endodeoxyribonuclease RuvC of Proteus mirabilis (strain HI4320).